The primary structure comprises 502 residues: Cyanidin 3-O-glucoside 5-O-glucosyltransferase (acyl-glucose) (502 aa).

A signal peptide spans 1 to 30 (MNMSCKFEIVLLVSWWLLLVLVFGVESSMF). Residue N2 is glycosylated (N-linked (GlcNAc...) asparagine). Residues Q52, H150, and 196 to 197 (NE) each bind a beta-D-glucoside. The active-site Proton donor is E197. N-linked (GlcNAc...) asparagine glycosylation occurs at N303. The a beta-D-glucoside site is built by Y320 and E388. E388 functions as the Nucleophile in the catalytic mechanism. The N-linked (GlcNAc...) asparagine glycan is linked to N425. A beta-D-glucoside is bound by residues W435 and F451.

This sequence belongs to the glycosyl hydrolase 1 family. In terms of tissue distribution, expressed in petals.

The protein resides in the vacuole. The catalysed reaction is cyanidin 3-O-beta-D-glucoside + 1-O-(trans-sinapoyl)-beta-D-glucose = cyanidin 3,5-di-O-beta-D-glucoside + (E)-sinapate. Its pathway is pigment biosynthesis; anthocyanin biosynthesis. Its function is as follows. Beta-glycosidase that catalyzes the transfer of glucose moiety to anthocyanidin 3-glucoside at the 5 position. Anthocyanins are ubiquitous colored pigments that are responsible for variations in petal color. Uses acyl-glucoses, but not UDP-glucose, as the glucose donor. The protein is Cyanidin 3-O-glucoside 5-O-glucosyltransferase (acyl-glucose) (AA5GT) of Dianthus caryophyllus (Carnation).